The primary structure comprises 550 residues: Hydroxylamine reductase (550 aa).

The [2Fe-2S] cluster site is built by C3, C6, C18, and C25. 8 residues coordinate hybrid [4Fe-2O-2S] cluster: H249, E273, C317, C405, C433, C458, E492, and K494. C405 bears the Cysteine persulfide mark.

This sequence belongs to the HCP family. [2Fe-2S] cluster is required as a cofactor. Requires hybrid [4Fe-2O-2S] cluster as cofactor.

It localises to the cytoplasm. The catalysed reaction is A + NH4(+) + H2O = hydroxylamine + AH2 + H(+). With respect to regulation, inhibited by oxygen. Activated by cyanide except in the prolonged presence of excess cyanide, where the enzyme is inactivated. In terms of biological role, catalyzes the reduction of hydroxylamine to form NH(3) and H(2)O. Is also able to reduce hydroxylamine analogs such as methylhydroxylamine and hydroxyquinone. Might have a role as a scavenger of potentially toxic by-products of nitrate metabolism. In Escherichia coli (strain K12), this protein is Hydroxylamine reductase.